Reading from the N-terminus, the 308-residue chain is Apolipoprotein E (308 aa).

The N-terminal stretch at 1-18 is a signal peptide; the sequence is MKFLWAALVVTLLAGCRA. A run of 8 repeats spans residues 75 to 96, 97 to 118, 119 to 140, 141 to 162, 163 to 184, 185 to 206, 207 to 224, and 225 to 246. The tract at residues 75-246 is 8 X 22 AA approximate tandem repeats; it reads LLIEETMKEV…RLDDMRDQME (172 aa). The tract at residues 153 to 163 is LDL and other lipoprotein receptors binding; sequence HLRKLRKRLLR. 157-160 contributes to the heparin binding site; it reads LRKR. A lipid-binding and lipoprotein association region spans residues 205-281; it reads AIPPSQQLRE…SWFEPLVQDM (77 aa). Heparin is bound at residue 220 to 227; sequence GQKVRGRL. The interval 257–308 is homooligomerization; sequence SQVRLQAEAFQTRLKSWFEPLVQDMQRQWASLVEKVQSTLGISPSTKPSKTK. The specificity for association with VLDL stretch occupies residues 269 to 281; sequence RLKSWFEPLVQDM.

Belongs to the apolipoprotein A1/A4/E family. In terms of assembly, homotetramer. May interact with ABCA1; functionally associated with ABCA1 in the biogenesis of HDLs. May interact with APP/A4 amyloid-beta peptide; the interaction is extremely stable in vitro but its physiological significance is unclear. May interact with MAPT. May interact with MAP2. In the cerebrospinal fluid, interacts with secreted SORL1. Interacts with PMEL; this allows the loading of PMEL luminal fragment on ILVs to induce fibril nucleation. Post-translationally, APOE exists as multiple glycosylated and sialylated glycoforms within cells and in plasma. The extent of glycosylation and sialylation are tissue and context specific. Glycated in plasma VLDL. In terms of processing, phosphorylated by FAM20C in the extracellular medium.

The protein localises to the secreted. It is found in the extracellular space. The protein resides in the extracellular matrix. It localises to the extracellular vesicle. Its subcellular location is the endosome. The protein localises to the multivesicular body. In terms of biological role, APOE is an apolipoprotein, a protein associating with lipid particles, that mainly functions in lipoprotein-mediated lipid transport between organs via the plasma and interstitial fluids. APOE is a core component of plasma lipoproteins and is involved in their production, conversion and clearance. Apolipoproteins are amphipathic molecules that interact both with lipids of the lipoprotein particle core and the aqueous environment of the plasma. As such, APOE associates with chylomicrons, chylomicron remnants, very low density lipoproteins (VLDL) and intermediate density lipoproteins (IDL) but shows a preferential binding to high-density lipoproteins (HDL). It also binds a wide range of cellular receptors including the LDL receptor/LDLR and the very low-density lipoprotein receptor/VLDLR that mediate the cellular uptake of the APOE-containing lipoprotein particles. Finally, APOE also has a heparin-binding activity and binds heparan-sulfate proteoglycans on the surface of cells, a property that supports the capture and the receptor-mediated uptake of APOE-containing lipoproteins by cells. This Pteropus vampyrus (Large flying fox) protein is Apolipoprotein E (APOE).